We begin with the raw amino-acid sequence, 454 residues long: Caspase-9 (454 aa).

Residues 1 to 92 (MDEADRQLLR…GTLASLLQSG (92 aa)) enclose the CARD domain. Threonine 163 bears the Phosphothreonine; by MAPK1 mark. At tyrosine 191 the chain carries Phosphotyrosine; by ABL1. Active-site residues include histidine 275 and cysteine 325. A phosphoserine mark is found at serine 340 and serine 348. Residues 354–367 (AVPYQEGPRPLDQL) constitute a propeptide that is removed on maturation.

This sequence belongs to the peptidase C14A family. In terms of assembly, heterotetramer that consists of two anti-parallel arranged heterodimers, each one formed by a 35 kDa (p35) and a 10 kDa (p10) subunit. Caspase-9 and APAF1 bind to each other via their respective NH2-terminal CED-3 homologous domains in the presence of cytochrome C and ATP. Interacts (inactive form) with EFHD2. Interacts with HAX1. Interacts with BIRC2/c-IAP1, XIAP/BIRC4, BIRC5/survivin, BIRC6/bruce and BIRC7/livin. Interacts with ABL1 (via SH3 domain); the interaction is direct and increased in the response of cells to genotoxic stress and ABL1/c-Abl activation. Interacts with BCL2L10. Post-translationally, cleavages at Asp-353 by granzyme B and at Asp-368 by caspase-3 generate the two active subunits. Caspase-8 and -10 can also be involved in these processing events. In terms of processing, phosphorylated at Thr-163 by MAPK1/ERK2. Phosphorylation at Thr-163 is sufficient to block caspase-9 processing and subsequent caspase-3 activation. Phosphorylation on Tyr-191 by ABL1/c-Abl; occurs in the response of cells to DNA damage. Ubiquitinated by BIRC6; this activity is inhibited by DIABLO/SMAC.

The enzyme catalyses Strict requirement for an Asp residue at position P1 and with a marked preference for His at position P2. It has a preferred cleavage sequence of Leu-Gly-His-Asp-|-Xaa.. Inhibited by BIRC6; following inhibition of BIRC6-caspase binding by DIABLO/SMAC, BIRC6 is subjected to caspase cleavage, leading to an increase in active caspases. In terms of biological role, involved in the activation cascade of caspases responsible for apoptosis execution. Binding of caspase-9 to Apaf-1 leads to activation of the protease which then cleaves and activates effector caspases caspase-3 (CASP3) or caspase-7 (CASP7). Promotes DNA damage-induced apoptosis in a ABL1/c-Abl-dependent manner. Proteolytically cleaves poly(ADP-ribose) polymerase (PARP). Cleaves BIRC6 following inhibition of BIRC6-caspase binding by DIABLO/SMAC. This Mus musculus (Mouse) protein is Caspase-9 (Casp9).